The chain runs to 236 residues: Thiamine import ATP-binding protein ThiQ (236 aa).

The region spanning Leu-2 to Ile-230 is the ABC transporter domain. Gly-32–Ser-39 contributes to the ATP binding site.

It belongs to the ABC transporter superfamily. Thiamine importer (TC 3.A.1.19.1) family. In terms of assembly, the complex is composed of two ATP-binding proteins (ThiQ), two transmembrane proteins (ThiP) and a solute-binding protein (ThiB).

The protein resides in the cell inner membrane. The catalysed reaction is thiamine(out) + ATP + H2O = thiamine(in) + ADP + phosphate + H(+). Its function is as follows. Part of the ABC transporter complex ThiBPQ involved in thiamine import. Responsible for energy coupling to the transport system. The protein is Thiamine import ATP-binding protein ThiQ of Yersinia pestis bv. Antiqua (strain Antiqua).